The sequence spans 361 residues: S-adenosylmethionine decarboxylase proenzyme (361 aa).

Residues Glu13 and Glu16 contribute to the active site. Ser73 (schiff-base intermediate with substrate; via pyruvic acid) is an active-site residue. Ser73 bears the Pyruvic acid (Ser); by autocatalysis mark. The active-site Proton donor; for catalytic activity is the Cys87. Catalysis depends on proton acceptor; for processing activity residues Ser236 and His249.

This sequence belongs to the eukaryotic AdoMetDC family. The cofactor is pyruvate. Post-translationally, is synthesized initially as an inactive proenzyme. Formation of the active enzyme involves a self-maturation process in which the active site pyruvoyl group is generated from an internal serine residue via an autocatalytic post-translational modification. Two non-identical subunits are generated from the proenzyme in this reaction, and the pyruvate is formed at the N-terminus of the alpha chain, which is derived from the carboxyl end of the proenzyme. The post-translation cleavage follows an unusual pathway, termed non-hydrolytic serinolysis, in which the side chain hydroxyl group of the serine supplies its oxygen atom to form the C-terminus of the beta chain, while the remainder of the serine residue undergoes an oxidative deamination to produce ammonia and the pyruvoyl group blocking the N-terminus of the alpha chain.

The enzyme catalyses S-adenosyl-L-methionine + H(+) = S-adenosyl 3-(methylsulfanyl)propylamine + CO2. Its pathway is amine and polyamine biosynthesis; S-adenosylmethioninamine biosynthesis; S-adenosylmethioninamine from S-adenosyl-L-methionine: step 1/1. The protein is S-adenosylmethionine decarboxylase proenzyme (SAMDC) of Nicotiana tabacum (Common tobacco).